The following is a 435-amino-acid chain: Ras association domain-containing protein 9 (435 aa).

The segment at 1-22 (MAPFGRNLLKTRHKNRSPTKDM) is disordered. Positions 25–119 (EEKEIVVWVC…MQFVLVKADA (95 aa)) constitute a Ras-associating domain. A coiled-coil region spans residues 195–290 (HTIHQQVKRM…DKLSAEIEKE (96 aa)). The segment at 380–435 (NRAKESEVPSSNGEIPPFTQRVFSNYTNDTDSDTGISSNHSQDSETTVGDVVLLST) is disordered. Over residues 400–426 (RVFSNYTNDTDSDTGISSNHSQDSETT) the composition is skewed to polar residues.

Interacts with PAM.

It is found in the endosome. May play a role in regulating vesicuar trafficking in cells. This Homo sapiens (Human) protein is Ras association domain-containing protein 9 (RASSF9).